The primary structure comprises 473 residues: MKTLYSLRRFYPVETLFNGTLTLAGRDQETTGFAWWAGNARLINLSGKLLGAHVAHAGLIVFWAGAMNLFEVAHFVPEKPMYEQGLILLPHLATLGWGVGPGGEIVDTFPYFVSGVLHLISSAVLGFGGIYHALIGPETLEESFPFFGYVWKDRNKMTTILGIHLILLGVGAFLLVFKALYFGGIYDTWAPGGGDVRKITNLTLNPSTIFGYLLKSPFGGEGWIVSVDNLEDLIGGHVWLGSICIFGGIWHILTKPFAWARRAFVWSGEAYLSYSLAALSVFGFIACCFVWFNNTAYPSEFYGPTGPEASQAQAFTFLVRDQRLGASVGSAQGPTGLGKYLMRSPTGEIIFGGETMRFWDLRAPWLEPLRGPNGLDLSKLKKDIQPWQERRSAEYMTHAPLGSLNSVGGVATEINAVNYVSPRSWLATSHFVLGFFFFVGHLWHAGRARAAAAGFEKGIDRDFEPVLSMTPLN.

The propeptide occupies 1–14; that stretch reads MKTLYSLRRFYPVE. Thr-15 carries the post-translational modification N-acetylthreonine. Thr-15 is modified (phosphothreonine). 5 consecutive transmembrane segments (helical) span residues 69–93, 134–155, 178–200, 255–275, and 291–312; these read LFEV…PHLA, LIGP…KDRN, KALY…RKIT, KPFA…LSYS, and WFNN…ASQA. Glu-367 serves as a coordination point for [CaMn4O5] cluster. The chain crosses the membrane as a helical span at residues 447 to 471; sequence RARAAAAGFEKGIDRDFEPVLSMTP.

Belongs to the PsbB/PsbC family. PsbC subfamily. As to quaternary structure, PSII is composed of 1 copy each of membrane proteins PsbA, PsbB, PsbC, PsbD, PsbE, PsbF, PsbH, PsbI, PsbJ, PsbK, PsbL, PsbM, PsbT, PsbX, PsbY, PsbZ, Psb30/Ycf12, at least 3 peripheral proteins of the oxygen-evolving complex and a large number of cofactors. It forms dimeric complexes. It depends on Binds multiple chlorophylls and provides some of the ligands for the Ca-4Mn-5O cluster of the oxygen-evolving complex. It may also provide a ligand for a Cl- that is required for oxygen evolution. PSII binds additional chlorophylls, carotenoids and specific lipids. as a cofactor.

The protein localises to the plastid. Its subcellular location is the chloroplast thylakoid membrane. Its function is as follows. One of the components of the core complex of photosystem II (PSII). It binds chlorophyll and helps catalyze the primary light-induced photochemical processes of PSII. PSII is a light-driven water:plastoquinone oxidoreductase, using light energy to abstract electrons from H(2)O, generating O(2) and a proton gradient subsequently used for ATP formation. The chain is Photosystem II CP43 reaction center protein from Cryptomeria japonica (Japanese cedar).